A 93-amino-acid polypeptide reads, in one-letter code: Peptide YY-like (93 aa).

A signal peptide spans 1–27 (MVSPRVRLAALALSVCAILCLGMHASA). Y63 bears the Tyrosine amide mark. A propeptide spans 65 to 93 (KRALTPENWIYRDPAEERVTYGLDDYAMW) (C-terminal extension).

It belongs to the NPY family. As to expression, gut and medial reticulospinal neuron system in the brainstem.

Its subcellular location is the secreted. Functionally, gastrointestinal hormone and neuropeptide. The polypeptide is Peptide YY-like (pyy) (Lampetra fluviatilis (European river lamprey)).